A 350-amino-acid polypeptide reads, in one-letter code: GTPase Obg (350 aa).

Residues 1–159 (MKLVDEAEIL…RLLKLELKLL (159 aa)) form the Obg domain. The 178-residue stretch at 160-337 (ADVGLLGFPN…IMKDVMAFFD (178 aa)) folds into the OBG-type G domain. Residues 166–173 (GFPNAGKS), 191–195 (FTTLY), 213–216 (DVPG), 287–290 (NKAD), and 318–320 (SAL) contribute to the GTP site. 2 residues coordinate Mg(2+): serine 173 and threonine 193.

Belongs to the TRAFAC class OBG-HflX-like GTPase superfamily. OBG GTPase family. As to quaternary structure, monomer. Requires Mg(2+) as cofactor.

Its subcellular location is the cytoplasm. Its function is as follows. An essential GTPase which binds GTP, GDP and possibly (p)ppGpp with moderate affinity, with high nucleotide exchange rates and a fairly low GTP hydrolysis rate. Plays a role in control of the cell cycle, stress response, ribosome biogenesis and in those bacteria that undergo differentiation, in morphogenesis control. This Xanthomonas campestris pv. campestris (strain 8004) protein is GTPase Obg.